Consider the following 450-residue polypeptide: Phosphoglucosamine mutase (450 aa).

Catalysis depends on Ser102, which acts as the Phosphoserine intermediate. Residues Ser102, Asp243, Asp245, and Asp247 each coordinate Mg(2+). Ser102 carries the post-translational modification Phosphoserine.

This sequence belongs to the phosphohexose mutase family. Mg(2+) is required as a cofactor. Post-translationally, activated by phosphorylation.

The catalysed reaction is alpha-D-glucosamine 1-phosphate = D-glucosamine 6-phosphate. Its function is as follows. Catalyzes the conversion of glucosamine-6-phosphate to glucosamine-1-phosphate. The sequence is that of Phosphoglucosamine mutase from Agrobacterium fabrum (strain C58 / ATCC 33970) (Agrobacterium tumefaciens (strain C58)).